Here is a 460-residue protein sequence, read N- to C-terminus: Diguanylate cyclase DosC (460 aa).

His98 serves as a coordination point for heme. The GGDEF domain maps to 325–458; it reads TPLSVLIIDV…GRNRVELWKA (134 aa). Residue Asp333 coordinates Mg(2+). The substrate site is built by Asn341 and Asp350. Asp376 contacts Mg(2+). Asp376 acts as the Proton acceptor in catalysis.

The cofactor is heme. It depends on Mg(2+) as a cofactor.

The enzyme catalyses 2 GTP = 3',3'-c-di-GMP + 2 diphosphate. It functions in the pathway purine metabolism; 3',5'-cyclic di-GMP biosynthesis. In terms of biological role, globin-coupled heme-based oxygen sensor protein displaying diguanylate cyclase (DGC) activity in response to oxygen availability. Thus, catalyzes the synthesis of cyclic diguanylate (c-di-GMP) via the condensation of 2 GTP molecules. Cyclic-di-GMP is a second messenger which controls cell surface-associated traits in bacteria. The sequence is that of Diguanylate cyclase DosC (dosC) from Escherichia coli O157:H7.